Here is a 2507-residue protein sequence, read N- to C-terminus: Putative neurobeachin homolog (2507 aa).

3 disordered regions span residues 1–109 (MEIS…PPLP), 1307–1377 (PSSP…DGGR), and 1629–1649 (SRHE…EISE). Over residues 24-37 (PVEEGEEVNDEESN) the composition is skewed to acidic residues. Polar residues predominate over residues 1317–1340 (TTQKQENSENVNSETSPENGSNGK). Over residues 1360 to 1372 (DGEEEENGEEGQG) the composition is skewed to acidic residues. The BEACH-type PH domain occupies 1690 to 1798 (PSSQSACFST…AVKKVVYQLP (109 aa)). In terms of domain architecture, BEACH spans 1817–2106 (MTPRQLFKHS…QLLTEAHPPR (290 aa)). WD repeat units lie at residues 2265–2308 (GHGD…GFIA), 2326–2365 (GHEA…LRRI), 2405–2444 (LVDD…KLYT), and 2447–2486 (PLNS…WHYE).

This sequence belongs to the WD repeat neurobeachin family. Interacts with RII subunit of PKA. Expressed in vulval precursor cells and rectal epithelia in L2 and L3 larvae. In L4 larvae, expression is seen in intestinal epithelial cells.

It localises to the cytoplasm. The protein resides in the membrane. Its subcellular location is the nucleus. Its function is as follows. Binds to type II regulatory subunits of protein kinase A and anchors/targets them to the membrane. May anchor the kinase to cytoskeletal and/or organelle-associated proteins. Regulates endosomal traffic in polarized epithelial cells such as the vulval precursor cells and intestinal cells. Thought to act as a negative regulator of lin-12 activity in vulval precursor cells. May have a role in the internalization process from basolateral surface of polarized epithelial cells. The sequence is that of Putative neurobeachin homolog (sel-2) from Caenorhabditis elegans.